Here is a 316-residue protein sequence, read N- to C-terminus: N-acetyl-gamma-glutamyl-phosphate reductase (316 aa).

Cysteine 136 is a catalytic residue.

Belongs to the NAGSA dehydrogenase family. Type 1 subfamily.

It localises to the cytoplasm. It carries out the reaction N-acetyl-L-glutamate 5-semialdehyde + phosphate + NADP(+) = N-acetyl-L-glutamyl 5-phosphate + NADPH + H(+). It participates in amino-acid biosynthesis; L-arginine biosynthesis; N(2)-acetyl-L-ornithine from L-glutamate: step 3/4. Its function is as follows. Catalyzes the NADPH-dependent reduction of N-acetyl-5-glutamyl phosphate to yield N-acetyl-L-glutamate 5-semialdehyde. This is N-acetyl-gamma-glutamyl-phosphate reductase from Xanthomonas oryzae pv. oryzae (strain MAFF 311018).